The sequence spans 471 residues: Proline and serine-rich protein 2 (471 aa).

2 disordered regions span residues 1 to 46 (MPGN…SFTM) and 82 to 247 (CDSG…GDHV). Residues 26–43 (LSRGGSLESRCSSSRSRS) are compositionally biased toward low complexity. A Phosphoserine modification is found at Ser43. The residue at position 45 (Thr45) is a Phosphothreonine. The span at 90-101 (SPQSLEESPSSH) shows a compositional bias: low complexity. Residues 154–177 (LPPPDSRGPEVFPLPPSLPVPAPS) are compositionally biased toward pro residues. Phosphoserine is present on residues Ser187, Ser220, and Ser223. An Asymmetric dimethylarginine; alternate modification is found at Arg263. Arg263 bears the Omega-N-methylarginine; alternate mark. Disordered stretches follow at residues 310 to 365 (DTSS…TEQP) and 383 to 437 (PSSF…RAVG). Residues 313-324 (SEERWQKAEEQR) are compositionally biased toward basic and acidic residues. 2 stretches are compositionally biased toward polar residues: residues 354–364 (AQQSRAVQTEQ) and 383–393 (PSSFVPTSKTI). Residues 415-427 (YEPRPDGSQDARK) show a composition bias toward basic and acidic residues. A Phosphoserine modification is found at Ser431. Residue Arg450 is modified to Omega-N-methylarginine.

The sequence is that of Proline and serine-rich protein 2 (Proser2) from Mus musculus (Mouse).